Here is a 236-residue protein sequence, read N- to C-terminus: MSFLKSFPPPGSADGLRLQQPDTEAVLNGKGLGTGTLYIAESRLSWLDGSGLGFSLEYPTISLHAVSRDPNAYPQEHLYVMVNARFGEESKEPFSDEDEDDNDDVEPISEFRFVPSDKSALEAMFTAMCECQALHPDPEDEDSDDYDGEEYDVEAHEQGQGDIPTFYTYEEGLSHLTAEGQATLERLEGMLSQSVSSQYNMAGVRTEDSVRTYEDGMEVETTPTVAGQFEDADVDH.

Residue Ser2 is modified to N-acetylserine. 6 positions are modified to phosphoserine: Ser95, Ser143, Ser192, Ser194, Ser197, and Ser209. The tract at residues 134 to 158 (LHPDPEDEDSDDYDGEEYDVEAHEQ) is disordered. Residues 138 to 152 (PEDEDSDDYDGEEYD) show a composition bias toward acidic residues. A Phosphothreonine modification is found at Thr222.

Belongs to the pICln (TC 1.A.47) family. Component of the methylosome, a 20S complex containing at least PRMT5/SKB1, WDR77/MEP50 and CLNS1A/pICln. May mediate SNRPD1 and SNRPD3 methylation. Forms a 6S pICln-Sm complex composed of CLNS1A/pICln, SNRPD1, SNRPD2, SNRPE, SNRPF and SNRPG; ring-like structure where CLNS1A/pICln mimics additional Sm proteins and which is unable to assemble into the core snRNP. Interacts with LSM10 and LSM11. Expressed in most tissues.

Its subcellular location is the cytoplasm. The protein resides in the cytosol. It localises to the nucleus. It is found in the cytoskeleton. Involved in both the assembly of spliceosomal snRNPs and the methylation of Sm proteins. Chaperone that regulates the assembly of spliceosomal U1, U2, U4 and U5 small nuclear ribonucleoproteins (snRNPs), the building blocks of the spliceosome, and thereby plays an important role in the splicing of cellular pre-mRNAs. Most spliceosomal snRNPs contain a common set of Sm proteins SNRPB, SNRPD1, SNRPD2, SNRPD3, SNRPE, SNRPF and SNRPG that assemble in a heptameric protein ring on the Sm site of the small nuclear RNA to form the core snRNP (Sm core). In the cytosol, the Sm proteins SNRPD1, SNRPD2, SNRPE, SNRPF and SNRPG are trapped in an inactive 6S pICln-Sm complex by the chaperone CLNS1A that controls the assembly of the core snRNP. Dissociation by the SMN complex of CLNS1A from the trapped Sm proteins and their transfer to an SMN-Sm complex triggers the assembly of core snRNPs and their transport to the nucleus. The protein is Methylosome subunit pICln (Clns1a) of Rattus norvegicus (Rat).